The primary structure comprises 894 residues: Alpha-actinin-2 (894 aa).

The actin-binding stretch occupies residues 1-254 (MNQIEPGVQY…IMTYVSCFYH (254 aa)). Calponin-homology (CH) domains follow at residues 38-142 (KQQR…LRFA) and 151-257 (TSAK…HAFA). Residue threonine 237 is modified to Phosphothreonine. Spectrin repeat units lie at residues 281-391 (RLME…WLLN), 401-506 (HLAE…ALER), 516-627 (QLHL…SLQE), and 637-740 (RLRR…EVET). EF-hand domains follow at residues 753-788 (EQMN…MGYD) and 789-824 (LGEA…ETAD). Residues aspartate 766, asparagine 770, aspartate 777, aspartate 802, asparagine 804, and threonine 808 each contribute to the Ca(2+) site.

The protein belongs to the alpha-actinin family. As to quaternary structure, homodimer; antiparallel. Also forms heterodimers with ACTN3. Interacts with ADAM12, MYOZ1, MYOZ2 and MYOZ3. Interacts via its C-terminal region with the LDB3 PDZ domain. Interacts with XIRP2. Interacts with DST (via N-terminus). Interacts with PARVB. Interacts with SYNPO2. Post-translationally, ubiquitinated by FBXL22, leading to proteasomal degradation.

It is found in the cytoplasm. The protein resides in the myofibril. It localises to the sarcomere. The protein localises to the z line. In terms of biological role, F-actin cross-linking protein which is thought to anchor actin to a variety of intracellular structures. This is a bundling protein. This is Alpha-actinin-2 (ACTN2) from Bos taurus (Bovine).